The following is a 167-amino-acid chain: Translationally-controlled tumor protein homolog (167 aa).

The TCTP domain occupies 1–167; sequence MIIFKDVISN…WKHGIKEEKI (167 aa).

Belongs to the TCTP family.

Its subcellular location is the cytoplasm. The protein localises to the cytoskeleton. In terms of biological role, involved in protein synthesis. Involved in microtubule stabilization. The chain is Translationally-controlled tumor protein homolog from Yarrowia lipolytica (strain CLIB 122 / E 150) (Yeast).